The sequence spans 270 residues: MDPRQACLDCLAQEPPALFEAALWIAAEHLPAYSPAHALRELDELVRQIGASLDDRASASERAQGLLRRMSEQGFCEDDDFPLQPRSALLPLVLQRRQGQPLSLALVAMELARRLDIPLVGVNFPGRFLLRVPQADHLLDPATGRRLYTPDCRELLLRLQGPKSELQAAYLKQASPGEILQRLSRNLRQLHSAAGEPLAALKDAQRVIELGPVGAADHEARAGLYRQLDCPQAERYDLERALLLSDDPTEQLRLGQRLGELAPPTSRALH.

The protein belongs to the UPF0162 family.

The protein is UPF0162 protein PA3419 of Pseudomonas aeruginosa (strain ATCC 15692 / DSM 22644 / CIP 104116 / JCM 14847 / LMG 12228 / 1C / PRS 101 / PAO1).